A 188-amino-acid chain; its full sequence is Ribosome maturation factor RimM (188 aa).

The 76-residue stretch at 112 to 187 folds into the PRC barrel domain; sequence SDSYYWVDLI…LLTLDWQSDW (76 aa).

This sequence belongs to the RimM family. As to quaternary structure, binds ribosomal protein uS19.

It is found in the cytoplasm. An accessory protein needed during the final step in the assembly of 30S ribosomal subunit, possibly for assembly of the head region. Essential for efficient processing of 16S rRNA. May be needed both before and after RbfA during the maturation of 16S rRNA. It has affinity for free ribosomal 30S subunits but not for 70S ribosomes. This Polynucleobacter asymbioticus (strain DSM 18221 / CIP 109841 / QLW-P1DMWA-1) (Polynucleobacter necessarius subsp. asymbioticus) protein is Ribosome maturation factor RimM.